The primary structure comprises 112 residues: B3 domain-containing protein At1g43171 (112 aa).

Positions 19 to 112 form a DNA-binding region, TF-B3; it reads DIVGNVALPK…FENKFIVLNF (94 aa).

Its subcellular location is the nucleus. This is B3 domain-containing protein At1g43171 from Arabidopsis thaliana (Mouse-ear cress).